Reading from the N-terminus, the 256-residue chain is Deoxyribose-phosphate aldolase (256 aa).

Aspartate 102 functions as the Proton donor/acceptor in the catalytic mechanism. Residue lysine 165 is the Schiff-base intermediate with acetaldehyde of the active site. Lysine 197 acts as the Proton donor/acceptor in catalysis.

It belongs to the DeoC/FbaB aldolase family. DeoC type 2 subfamily.

Its subcellular location is the cytoplasm. The enzyme catalyses 2-deoxy-D-ribose 5-phosphate = D-glyceraldehyde 3-phosphate + acetaldehyde. The protein operates within carbohydrate degradation; 2-deoxy-D-ribose 1-phosphate degradation; D-glyceraldehyde 3-phosphate and acetaldehyde from 2-deoxy-alpha-D-ribose 1-phosphate: step 2/2. Functionally, catalyzes a reversible aldol reaction between acetaldehyde and D-glyceraldehyde 3-phosphate to generate 2-deoxy-D-ribose 5-phosphate. The chain is Deoxyribose-phosphate aldolase from Shewanella sp. (strain MR-7).